A 447-amino-acid chain; its full sequence is N-succinylarginine dihydrolase (447 aa).

Residues 19–28, N110, and 137–138 contribute to the substrate site; these read AGLSFGNEAS and HR. E174 is an active-site residue. R212 provides a ligand contact to substrate. H248 is a catalytic residue. Substrate contacts are provided by D250 and N359. The active-site Nucleophile is C365.

This sequence belongs to the succinylarginine dihydrolase family. In terms of assembly, homodimer.

It carries out the reaction N(2)-succinyl-L-arginine + 2 H2O + 2 H(+) = N(2)-succinyl-L-ornithine + 2 NH4(+) + CO2. It participates in amino-acid degradation; L-arginine degradation via AST pathway; L-glutamate and succinate from L-arginine: step 2/5. In terms of biological role, catalyzes the hydrolysis of N(2)-succinylarginine into N(2)-succinylornithine, ammonia and CO(2). The chain is N-succinylarginine dihydrolase from Salmonella enteritidis PT4 (strain P125109).